Consider the following 217-residue polypeptide: MKTRMIFVGPPGAGKGSQAKIISQTLNIPHISTGDMFRTHIKGSTPLGLEAKKYTDQGLLVPDDVTNQMVKDRLSQKDVEKGFIFDGYPRTPDQAIFLDNLLMVTNQKLDVVLNISSSDEVIVKRITGRRTCPVCGAIYHVDNYPPKVAGICDNDGATLVQRKDDQKETIIRRLSVYKEETFPLIKYYAHKNLLMDVDGNQPLEVITKHVLEILEQK.

An ATP-binding site is contributed by 12 to 17; sequence GAGKGS. The interval 32-61 is NMP; sequence STGDMFRTHIKGSTPLGLEAKKYTDQGLLV. Residues threonine 33, arginine 38, 59 to 61, 87 to 90, and glutamine 94 each bind AMP; these read LLV and GYPR. The interval 128-165 is LID; it reads GRRTCPVCGAIYHVDNYPPKVAGICDNDGATLVQRKDD. An ATP-binding site is contributed by arginine 129. The Zn(2+) site is built by cysteine 132 and cysteine 135. ATP is bound at residue 138-139; that stretch reads IY. The Zn(2+) site is built by cysteine 152 and aspartate 155. AMP is bound by residues arginine 162 and arginine 173. ATP is bound at residue glutamine 201.

It belongs to the adenylate kinase family. In terms of assembly, monomer.

It is found in the cytoplasm. The enzyme catalyses AMP + ATP = 2 ADP. Its pathway is purine metabolism; AMP biosynthesis via salvage pathway; AMP from ADP: step 1/1. Functionally, catalyzes the reversible transfer of the terminal phosphate group between ATP and AMP. Plays an important role in cellular energy homeostasis and in adenine nucleotide metabolism. This Acholeplasma laidlawii (strain PG-8A) protein is Adenylate kinase.